Here is a 91-residue protein sequence, read N- to C-terminus: Teretoxin Tan6.2 (91 aa).

Residues 1 to 21 (MATSGRLLCVCLVLGLVFGSL) form the signal peptide. The propeptide occupies 22-50 (GYPVMEKKRAGKNFDLGTIANWAWQIGEK).

This sequence belongs to the teretoxin M (TM) superfamily. In terms of processing, contains 3 disulfide bonds. In terms of tissue distribution, expressed by the venom duct.

The protein localises to the secreted. The sequence is that of Teretoxin Tan6.2 from Terebra anilis (Auger snail).